The following is a 375-amino-acid chain: DNA replication and repair protein RecF (375 aa).

30–37 (GENAQGKT) contacts ATP.

This sequence belongs to the RecF family.

The protein localises to the cytoplasm. Functionally, the RecF protein is involved in DNA metabolism; it is required for DNA replication and normal SOS inducibility. RecF binds preferentially to single-stranded, linear DNA. It also seems to bind ATP. This is DNA replication and repair protein RecF from Enterococcus faecalis (strain ATCC 700802 / V583).